Reading from the N-terminus, the 186-residue chain is Ribosome-recycling factor (186 aa).

It belongs to the RRF family.

Its subcellular location is the cytoplasm. Responsible for the release of ribosomes from messenger RNA at the termination of protein biosynthesis. May increase the efficiency of translation by recycling ribosomes from one round of translation to another. The sequence is that of Ribosome-recycling factor from Bartonella bacilliformis (strain ATCC 35685 / KC583 / Herrer 020/F12,63).